Here is a 143-residue protein sequence, read N- to C-terminus: Large ribosomal subunit protein uL11 (143 aa).

This sequence belongs to the universal ribosomal protein uL11 family. Part of the ribosomal stalk of the 50S ribosomal subunit. Interacts with L10 and the large rRNA to form the base of the stalk. L10 forms an elongated spine to which L12 dimers bind in a sequential fashion forming a multimeric L10(L12)X complex. Post-translationally, one or more lysine residues are methylated.

Its function is as follows. Forms part of the ribosomal stalk which helps the ribosome interact with GTP-bound translation factors. In Burkholderia cenocepacia (strain HI2424), this protein is Large ribosomal subunit protein uL11.